Here is a 401-residue protein sequence, read N- to C-terminus: Succinyl-diaminopimelate desuccinylase (401 aa).

H71 is a Zn(2+) binding site. Residue D73 is part of the active site. D104 contributes to the Zn(2+) binding site. E138 serves as the catalytic Proton acceptor. The Zn(2+) site is built by E139, E167, and H352.

It belongs to the peptidase M20A family. DapE subfamily. In terms of assembly, homodimer. Zn(2+) serves as cofactor. It depends on Co(2+) as a cofactor.

It catalyses the reaction N-succinyl-(2S,6S)-2,6-diaminopimelate + H2O = (2S,6S)-2,6-diaminopimelate + succinate. Its pathway is amino-acid biosynthesis; L-lysine biosynthesis via DAP pathway; LL-2,6-diaminopimelate from (S)-tetrahydrodipicolinate (succinylase route): step 3/3. Its function is as follows. Catalyzes the hydrolysis of N-succinyl-L,L-diaminopimelic acid (SDAP), forming succinate and LL-2,6-diaminopimelate (DAP), an intermediate involved in the bacterial biosynthesis of lysine and meso-diaminopimelic acid, an essential component of bacterial cell walls. In Wolbachia sp. subsp. Brugia malayi (strain TRS), this protein is Succinyl-diaminopimelate desuccinylase.